Reading from the N-terminus, the 275-residue chain is Elongation factor Ts (275 aa).

The tract at residues 76–79 is involved in Mg(2+) ion dislocation from EF-Tu; that stretch reads TDFV.

Belongs to the EF-Ts family.

It is found in the cytoplasm. In terms of biological role, associates with the EF-Tu.GDP complex and induces the exchange of GDP to GTP. It remains bound to the aminoacyl-tRNA.EF-Tu.GTP complex up to the GTP hydrolysis stage on the ribosome. In Corynebacterium diphtheriae (strain ATCC 700971 / NCTC 13129 / Biotype gravis), this protein is Elongation factor Ts.